Consider the following 861-residue polypeptide: Importin subunit beta-1 (861 aa).

An N-acetylserine modification is found at Ser2. 19 HEAT repeats span residues 3 to 35, 37 to 66, 90 to 129, 134 to 164, 177 to 208, 219 to 255, 260 to 306, 317 to 362, 367 to 395, 402 to 442, 452 to 484, 496 to 530, 536 to 586, 592 to 629, 634 to 669, 675 to 713, 718 to 764, 773 to 812, and 819 to 859; these read TAEF…LSND, FLQF…LTLK, PEAK…ELPH, ELMK…YMCE, SNNI…LADS, EGER…MSLY, KPYM…ELAQ, FALS…AQNC, LEPV…AFGS, KVQR…ADSV, LPGV…VEQL, YPAL…MVEY, AETS…VIRK, EPVA…AASL, EKYL…ISNS, RRYS…ASNI, IPYL…IVAG, FPYV…IAAM, and KQFY…KRQL. One can recognise an Importin N-terminal domain in the interval 25–106; the sequence is SETQLKKLSN…KTNALTALVS (82 aa). A Phosphoserine modification is found at Ser836.

It belongs to the importin beta family. Importin beta-1 subfamily. Forms a complex with the importin alpha subunit (SRP1/KAP60). Interacts with Ran (GSP1); interacts specifically with the GTP-bound form of Ran (GTP-Ran), protecting it from GTP hydrolysis and nucleotide exchange. Interacts with nucleoporin NUP1.

The protein resides in the cytoplasm. It localises to the nucleus. It is found in the nuclear pore complex. Functionally, importin beta subunit that functions in nuclear protein import through association with the importin alpha subunit, which binds to the classical nuclear localization signal (cNLS) in cargo substrates. Docking of the importin/substrate complex to the nuclear pore complex (NPC) is mediated by importin beta through binding to nucleoporin FxFG repeats and the complex is subsequently translocated through the pore by an energy requiring, Ran-dependent mechanism. At the nucleoplasmic side of the NPC, GTP-Ran binds to importin beta and the three components separate, leading to release of the cargo. Importin alpha and beta are re-exported from the nucleus to the cytoplasm where GTP hydrolysis releases Ran from importin beta. The directionality of nuclear import is thought to be conferred by an asymmetric distribution of the GTP- and GDP-bound forms of Ran between the cytoplasm and nucleus. Mediates the nuclear import of histones H2A and H2B. Mediates the nuclear import of transcription factor GCN4. This is Importin subunit beta-1 from Saccharomyces cerevisiae (strain ATCC 204508 / S288c) (Baker's yeast).